We begin with the raw amino-acid sequence, 1049 residues long: MEKRLGVKPNPASWILSGYYWQTSAKWLRSLYLFYTCFCFSVLWLSTDASESRCQQGKTQFGVGLRSGGENHLWLLEGTPSLQSCWAACCQDSACHVFWWLEGMCIQADCSRPQSCRAFRTHSSNSMLVFLKKFQTADDLGFLPEDDVPHLLGLGWNWASWRQSPPRAALRPAVSSSDQQSLIRKLQKRGSPSDVVTPIVTQHSKVNDSNELGGLTTSGSAEVHKAITISSPLTTDLTAELSGGPKNVSVQPEISEGLATTPSTQQVKSSEKTQIAVPQPVAPSYSYATPTPQASFQSTSAPYPVIKELVVSAGESVQITLPKNEVQLNAYVLQEPPKGETYTYDWQLITHPRDYSGEMEGKHSQILKLSKLTPGLYEFKVIVEGQNAHGEGYVNVTVKPEPRKNRPPIAIVSPQFQEISLPTTSTVIDGSQSTDDDKIVQYHWEELKGPLREEKISEDTAILKLSKLVPGNYTFSLTVVDSDGATNSTTANLTVNKAVDYPPVANAGPNQVITLPQNSITLFGNQSTDDHGITSYEWSLSPSSKGKVVEMQGVRTPTLQLSAMQEGDYTYQLTVTDTIGQQATAQVTVIVQPENNKPPQADAGPDKELTLPVDSTTLDGSKSSDDQKIISYLWEKTQGPDGVQLENANSSVATVTGLQVGTYVFTLTVKDERNLQSQSSVNVIVKEEINKPPIAKITGNVVITLPTSTAELDGSKSSDDKGIVSYLWTRDEGSPAAGEVLNHSDHHPILFLSNLVEGTYTFHLKVTDAKGESDTDRTTVEVKPDPRKNNLVEIILDINVSQLTERLKGMFIRQIGVLLGVLDSDIIVQKIQPYTEQSTKMVFFVQNEPPHQIFKGHEVAAMLKSELRKQKADFLIFRALEVNTVTCQLNCSDHGHCDSFTKRCICDPFWMENFIKVQLRDGDSNCEWSVLYVIIATFVIVVALGILSWTVICCCKRQKGKPKRKSKYKILDATDQESLELKPTSRAGIKQKGLLLSSSLMHSESELDSDDAIFTWPDREKGKLLHGQNGSVPNGQTPLKARSPREEIL.

At 1–29 (MEKRLGVKPNPASWILSGYYWQTSAKWLR) the chain is on the cytoplasmic side. Residues 30-50 (SLYLFYTCFCFSVLWLSTDAS) form a helical membrane-spanning segment. In terms of domain architecture, MANSC spans 49 to 127 (ASESRCQQGK…AFRTHSSNSM (79 aa)). Residues 51 to 932 (ESRCQQGKTQ…DSNCEWSVLY (882 aa)) are Extracellular-facing. 5 N-linked (GlcNAc...) asparagine glycosylation sites follow: Asn-247, Asn-395, Asn-472, Asn-487, and Asn-525. 5 consecutive PKD domains span residues 312–401 (SAGE…VKPE), 409–498 (IAIV…VNKA), 504–594 (VANA…VQPE), 600–688 (QADA…VKEE), and 694–785 (IAKI…VKPD). A helical transmembrane segment spans residues 933–953 (VIIATFVIVVALGILSWTVIC). Residues 954–1049 (CCKRQKGKPK…KARSPREEIL (96 aa)) are Cytoplasmic-facing. Thr-974 is modified (phosphothreonine). A phosphoserine mark is found at Ser-978, Ser-1009, and Ser-1031. The tract at residues 1022-1049 (GKLLHGQNGSVPNGQTPLKARSPREEIL) is disordered. Polar residues predominate over residues 1028–1037 (QNGSVPNGQT). A Phosphothreonine modification is found at Thr-1037.

In terms of assembly, interacts with RTN4R. (Microbial infection) Interacts with AAV-2 VP1. In terms of processing, N-glycosylated. Expressed in cortical neurons in the brain cortex (at protein level).

The protein localises to the cytoplasmic granule membrane. Its subcellular location is the golgi apparatus membrane. It localises to the golgi apparatus. The protein resides in the trans-Golgi network membrane. It is found in the cell membrane. Possible role in axon guidance through interaction with RTN4R. In terms of biological role, (Microbial infection) Acts as a receptor for adeno-associated virus and is involved in adeno-associated virus infection through endocytosis system. The polypeptide is Dyslexia-associated protein KIAA0319-like protein (Homo sapiens (Human)).